The following is a 351-amino-acid chain: Serine/threonine-protein kinase mos (351 aa).

The Protein kinase domain maps to 71–340; sequence FSIDGVIGSG…ERRTDDTENL (270 aa). Residues 77–85 and K98 contribute to the ATP site; that span reads IGSGGFGSV. D194 (proton acceptor) is an active-site residue.

The protein belongs to the protein kinase superfamily. Ser/Thr protein kinase family.

The enzyme catalyses L-seryl-[protein] + ATP = O-phospho-L-seryl-[protein] + ADP + H(+). It carries out the reaction L-threonyl-[protein] + ATP = O-phospho-L-threonyl-[protein] + ADP + H(+). Functionally, suppresses the mitotic cell cycle in oocytes, forcing them to undergo meiosis II to produce haploid gametes. Acts as a MAPK kinase kinase (MAP3K) that acts upstream of MAP kinase in oocytes. This chain is Serine/threonine-protein kinase mos, found in Patiria pectinifera (Starfish).